Here is a 589-residue protein sequence, read N- to C-terminus: Aspartate--tRNA ligase (589 aa).

L-aspartate is bound at residue glutamate 174. The tract at residues 198–201 (QLFK) is aspartate. Arginine 220 contacts L-aspartate. ATP contacts are provided by residues 220–222 (RDE) and glutamine 229. Histidine 448 lines the L-aspartate pocket. Glutamate 483 contributes to the ATP binding site. Arginine 490 lines the L-aspartate pocket. Residue 535–538 (GIDR) coordinates ATP.

It belongs to the class-II aminoacyl-tRNA synthetase family. Type 1 subfamily. Homodimer.

The protein localises to the cytoplasm. It catalyses the reaction tRNA(Asp) + L-aspartate + ATP = L-aspartyl-tRNA(Asp) + AMP + diphosphate. In terms of biological role, catalyzes the attachment of L-aspartate to tRNA(Asp) in a two-step reaction: L-aspartate is first activated by ATP to form Asp-AMP and then transferred to the acceptor end of tRNA(Asp). The protein is Aspartate--tRNA ligase of Xylella fastidiosa (strain M12).